The sequence spans 147 residues: 3-dehydroquinate dehydratase (147 aa).

Y25 functions as the Proton acceptor in the catalytic mechanism. Substrate is bound by residues N76, H82, and D89. H102 acts as the Proton donor in catalysis. Substrate-binding positions include 103-104 (LS) and R113.

It belongs to the type-II 3-dehydroquinase family. As to quaternary structure, homododecamer.

It carries out the reaction 3-dehydroquinate = 3-dehydroshikimate + H2O. The protein operates within metabolic intermediate biosynthesis; chorismate biosynthesis; chorismate from D-erythrose 4-phosphate and phosphoenolpyruvate: step 3/7. Functionally, catalyzes a trans-dehydration via an enolate intermediate. This is 3-dehydroquinate dehydratase from Nostoc sp. (strain PCC 7120 / SAG 25.82 / UTEX 2576).